The chain runs to 232 residues: RNA chaperone ProQ (232 aa).

The segment at 105–182 is disordered; that stretch reads EAKARVQAQR…REEQHTPVSD (78 aa). Residues 117–136 are compositionally biased toward basic and acidic residues; it reads QQAKKREAAAAAGEKEDAPR. The span at 137-146 shows a compositional bias: basic residues; it reads RERKPRPTTP. A compositionally biased stretch (basic and acidic residues) spans 147-177; it reads RRKEGAERKPRAQKPVEKAPKTVKAPREEQH.

The protein belongs to the ProQ family.

It localises to the cytoplasm. In terms of biological role, RNA chaperone with significant RNA binding, RNA strand exchange and RNA duplexing activities. May regulate ProP activity through an RNA-based, post-transcriptional mechanism. The polypeptide is RNA chaperone ProQ (Shigella boydii serotype 18 (strain CDC 3083-94 / BS512)).